Consider the following 331-residue polypeptide: Probable leucine carboxyl methyltransferase 1 (331 aa).

S-adenosyl-L-methionine contacts are provided by residues arginine 82, glycine 107, aspartate 131, 179 to 180 (DL), and glutamate 206.

Belongs to the methyltransferase superfamily. LCMT family.

It carries out the reaction [phosphatase 2A protein]-C-terminal L-leucine + S-adenosyl-L-methionine = [phosphatase 2A protein]-C-terminal L-leucine methyl ester + S-adenosyl-L-homocysteine. Functionally, methylates the carboxyl group of the C-terminal leucine residue of protein phosphatase 2A catalytic subunits to form alpha-leucine ester residues. This Caenorhabditis briggsae protein is Probable leucine carboxyl methyltransferase 1.